A 299-amino-acid chain; its full sequence is MKIIKITPRGFCKGVVDAYATCKKIAKLYPNHEKYLIGWLVHNKEIIKELEELGIQTKDDKNHSRSEIIDSIEIKDKNNPPIVIFSAHGTDQKTIDKAREKGLVVFDTTCIYVTKTHDLIKEKIEQGYQIFYIGVNNHPETISTLSIDKSIILIETVNDIENIRTESEKPIFVTNQTTISIYEFEEITETLKSKYKNIEFKNDICNAAKDRQDAVINMPSEVDLLLVVGDIKSNNSKKLVEIGIKKQIESHLIWNTKNIKDEWFINKKCLAITSGCSTPTWLANYVIIFLEKKLGTAND.

C12 is a binding site for [4Fe-4S] cluster. (2E)-4-hydroxy-3-methylbut-2-enyl diphosphate contacts are provided by H42 and H88. Residues H42 and H88 each contribute to the dimethylallyl diphosphate site. Isopentenyl diphosphate-binding residues include H42 and H88. [4Fe-4S] cluster is bound at residue C110. H138 lines the (2E)-4-hydroxy-3-methylbut-2-enyl diphosphate pocket. Dimethylallyl diphosphate is bound at residue H138. H138 is an isopentenyl diphosphate binding site. E140 functions as the Proton donor in the catalytic mechanism. T177 contacts (2E)-4-hydroxy-3-methylbut-2-enyl diphosphate. C205 lines the [4Fe-4S] cluster pocket. S233, N235, and S277 together coordinate (2E)-4-hydroxy-3-methylbut-2-enyl diphosphate. S233, N235, and S277 together coordinate dimethylallyl diphosphate. Isopentenyl diphosphate contacts are provided by S233, N235, and S277.

This sequence belongs to the IspH family. The cofactor is [4Fe-4S] cluster.

It carries out the reaction isopentenyl diphosphate + 2 oxidized [2Fe-2S]-[ferredoxin] + H2O = (2E)-4-hydroxy-3-methylbut-2-enyl diphosphate + 2 reduced [2Fe-2S]-[ferredoxin] + 2 H(+). The enzyme catalyses dimethylallyl diphosphate + 2 oxidized [2Fe-2S]-[ferredoxin] + H2O = (2E)-4-hydroxy-3-methylbut-2-enyl diphosphate + 2 reduced [2Fe-2S]-[ferredoxin] + 2 H(+). It functions in the pathway isoprenoid biosynthesis; dimethylallyl diphosphate biosynthesis; dimethylallyl diphosphate from (2E)-4-hydroxy-3-methylbutenyl diphosphate: step 1/1. It participates in isoprenoid biosynthesis; isopentenyl diphosphate biosynthesis via DXP pathway; isopentenyl diphosphate from 1-deoxy-D-xylulose 5-phosphate: step 6/6. Catalyzes the conversion of 1-hydroxy-2-methyl-2-(E)-butenyl 4-diphosphate (HMBPP) into a mixture of isopentenyl diphosphate (IPP) and dimethylallyl diphosphate (DMAPP). Acts in the terminal step of the DOXP/MEP pathway for isoprenoid precursor biosynthesis. In Malacoplasma penetrans (strain HF-2) (Mycoplasma penetrans), this protein is 4-hydroxy-3-methylbut-2-enyl diphosphate reductase.